A 316-amino-acid polypeptide reads, in one-letter code: tRNA methyltransferase 10 homolog B (316 aa).

Disordered stretches follow at residues 1–30 (MDCE…RDDG) and 42–98 (VEYD…DLGN). The segment covering 63 to 82 (VQRKQRHWERIVSSKKSKRK) has biased composition (basic residues). The stretch at 75–96 (SSKKSKRKQERERRKIKRAEDL) forms a coiled coil. Basic and acidic residues predominate over residues 83–95 (QERERRKIKRAED). In terms of domain architecture, SAM-dependent MTase TRM10-type spans 113–310 (TKEKLLEAKH…KGVSPGKGYI (198 aa)).

It belongs to the class IV-like SAM-binding methyltransferase superfamily. TRM10 family.

It catalyses the reaction guanosine(9) in tRNA + S-adenosyl-L-methionine = N(1)-methylguanosine(9) in tRNA + S-adenosyl-L-homocysteine + H(+). S-adenosyl-L-methionine-dependent guanine N(1)-methyltransferase that catalyzes the formation of N(1)-methylguanine at position 9 (m1G9) in tRNAs. Probably not able to catalyze formation of N(1)-methyladenine at position 9 (m1A9) in tRNAs. The polypeptide is tRNA methyltransferase 10 homolog B (Trmt10b) (Rattus norvegicus (Rat)).